The primary structure comprises 228 residues: Ribosomal RNA small subunit methyltransferase G (228 aa).

S-adenosyl-L-methionine is bound by residues glycine 70, alanine 121 to glutamate 122, and arginine 138.

The protein belongs to the methyltransferase superfamily. RNA methyltransferase RsmG family.

The protein resides in the cytoplasm. Its function is as follows. Specifically methylates the N7 position of a guanine in 16S rRNA. In Thermotoga sp. (strain RQ2), this protein is Ribosomal RNA small subunit methyltransferase G.